Reading from the N-terminus, the 485-residue chain is Ras-like GTPase YcjX (485 aa).

A Walker A motif motif is present at residues 33 to 40 (GLSGAGKT). Residues serine 35, glycine 36, glycine 38, lysine 39, threonine 40, alanine 41, tryptophan 110, serine 113, threonine 114, arginine 115, lysine 355, aspartate 357, and histidine 358 each coordinate GTP. Residues glycine 36, glycine 38, lysine 39, threonine 40, alanine 41, tryptophan 110, serine 113, and threonine 114 each contribute to the GDP site. GDP is bound by residues lysine 355, aspartate 357, histidine 358, serine 395, alanine 396, and isoleucine 397. Isoleucine 397 lines the GTP pocket.

In terms of assembly, monomer in solution. The cofactor is Mg(2+).

It catalyses the reaction GTP + H2O = GDP + phosphate + H(+). Alternates between an inactive form bound to GDP and an active form bound to GTP. Likely activated by a guanine nucleotide-exchange factor (GEF). In terms of biological role, binds GTP and GDP. Has intrinsic GTPase activity. Does not hydrolyze ATP. May act as a transducer of stress responses. The chain is Ras-like GTPase YcjX from Shewanella oneidensis (strain ATCC 700550 / JCM 31522 / CIP 106686 / LMG 19005 / NCIMB 14063 / MR-1).